A 397-amino-acid chain; its full sequence is Lysosomal acid lipase/cholesteryl ester hydrolase (397 aa).

A signal peptide spans 1 to 25 (MQLLGRVICFVVGILLSGGPTGTIS). A propeptide spans 26-72 (AVDPEANMNVTEIIMHWGYPEHSVQTGDGYILGVHRIPHGRKNQFDK) (removed in mature form). Residues Asn-34, Asn-99, and Asn-159 are each glycosylated (N-linked (GlcNAc...) asparagine). Residues 84–378 (HGFLADSSNW…EWDHLDFIWG (295 aa)) enclose the AB hydrolase-1 domain. Ser-172 serves as the catalytic Charge relay system. N-linked (GlcNAc...) asparagine glycans are attached at residues Asn-271 and Asn-319. The active-site Charge relay system is the His-372.

Belongs to the AB hydrolase superfamily. Lipase family. Monomer. Post-translationally, glycosylation is not essential for catalytic activity.

It localises to the lysosome. The catalysed reaction is a sterol ester + H2O = a sterol + a fatty acid + H(+). It catalyses the reaction cholesteryl (9Z-octadecenoate) + H2O = cholesterol + (9Z)-octadecenoate + H(+). The enzyme catalyses a triacylglycerol + H2O = a 1,2-diacylglycerol + a fatty acid + H(+). It carries out the reaction 1,2-di-(9Z-octadecenoyl)-glycerol + (9Z)-octadecenoate + H(+) = 1,2,3-tri-(9Z-octadecenoyl)-glycerol + H2O. The catalysed reaction is a 1,2-diacylglycerol + H2O = a 1-acylglycerol + a fatty acid + H(+). It catalyses the reaction 1,2-di-(9Z-octadecenoyl)-glycerol + H2O = 1-(9Z-octadecenoyl)-glycerol + (9Z)-octadecenoate + H(+). The enzyme catalyses a 1,3-diacylglycerol + H2O = a 1-acylglycerol + a fatty acid + H(+). It carries out the reaction 1,3-di-(9Z-octadecenoyl)-glycerol + H2O = 1-(9Z-octadecenoyl)-glycerol + (9Z)-octadecenoate + H(+). Its function is as follows. Catalyzes the deacylation of cholesteryl ester core lipids of endocytosed low density lipoproteins to generate free fatty acids and cholesterol. Hydrolyzes triglycerides (1,2,3-triacylglycerol) and diglycerides (such as 1,2-diacylglycerol and 1,3-diacylglycerol) with preference for the acyl moieties at the sn-1 or sn-3 positions. In Rattus norvegicus (Rat), this protein is Lysosomal acid lipase/cholesteryl ester hydrolase (Lipa).